Reading from the N-terminus, the 72-residue chain is Translation initiation factor IF-1 (72 aa).

The 72-residue stretch at 1–72 (MSKDDVIEID…DKGRITYRYK (72 aa)) folds into the S1-like domain.

The protein belongs to the IF-1 family. Component of the 30S ribosomal translation pre-initiation complex which assembles on the 30S ribosome in the order IF-2 and IF-3, IF-1 and N-formylmethionyl-tRNA(fMet); mRNA recruitment can occur at any time during PIC assembly.

It localises to the cytoplasm. Functionally, one of the essential components for the initiation of protein synthesis. Stabilizes the binding of IF-2 and IF-3 on the 30S subunit to which N-formylmethionyl-tRNA(fMet) subsequently binds. Helps modulate mRNA selection, yielding the 30S pre-initiation complex (PIC). Upon addition of the 50S ribosomal subunit IF-1, IF-2 and IF-3 are released leaving the mature 70S translation initiation complex. This chain is Translation initiation factor IF-1, found in Campylobacter hominis (strain ATCC BAA-381 / DSM 21671 / CCUG 45161 / LMG 19568 / NCTC 13146 / CH001A).